Reading from the N-terminus, the 127-residue chain is MAQSVPPGDIHTQPGSKIVFNAPYDDKHTYHIKITNAGGRRIGWAIKTTNMKRLGVDPPCGVLDPKENVLMAVSCDTFDATREDINNDRITIEWTNTPDGAAKQFRREWFQGDGMVRRKNLPIEYNL.

Ala2 is modified (N-acetylalanine). Residues 9–126 (DIHTQPGSKI…RRKNLPIEYN (118 aa)) enclose the MSP domain.

In terms of tissue distribution, sperm.

The protein localises to the cell projection. Its subcellular location is the pseudopodium. It is found in the cytoplasm. It localises to the cytoskeleton. Its function is as follows. Central component in molecular interactions underlying sperm crawling. Forms an extensive filament system that extends from sperm villipoda, along the leading edge of the pseudopod. The sequence is that of Major sperm protein 2 from Onchocerca volvulus.